We begin with the raw amino-acid sequence, 114 residues long: T cell receptor beta variable 6-5 (114 aa).

Residues 1–21 form the signal peptide; the sequence is MSIGLLCCAALSLLWAGPVNA. Residues 22–114 enclose the Ig-like domain; that stretch reads GVTQTPKFQV…TSVYFCASSY (93 aa). C42 and C110 are oxidised to a cystine. N-linked (GlcNAc...) asparagine glycosylation is present at N84.

Alpha-beta TR is a heterodimer composed of an alpha and beta chain; disulfide-linked. The alpha-beta TR is associated with the transmembrane signaling CD3 coreceptor proteins to form the TR-CD3 (TcR or TCR). The assembly of alpha-beta TR heterodimers with CD3 occurs in the endoplasmic reticulum where a single alpha-beta TR heterodimer associates with one CD3D-CD3E heterodimer, one CD3G-CD3E heterodimer and one CD247 homodimer forming a stable octameric structure. CD3D-CD3E and CD3G-CD3E heterodimers preferentially associate with TR alpha and TR beta chains, respectively. The association of the CD247 homodimer is the last step of TcR assembly in the endoplasmic reticulum and is required for transport to the cell surface.

It is found in the cell membrane. Its function is as follows. V region of the variable domain of T cell receptor (TR) beta chain that participates in the antigen recognition. Alpha-beta T cell receptors are antigen specific receptors which are essential to the immune response and are present on the cell surface of T lymphocytes. Recognize peptide-major histocompatibility (MH) (pMH) complexes that are displayed by antigen presenting cells (APC), a prerequisite for efficient T cell adaptive immunity against pathogens. Binding of alpha-beta TR to pMH complex initiates TR-CD3 clustering on the cell surface and intracellular activation of LCK that phosphorylates the ITAM motifs of CD3G, CD3D, CD3E and CD247 enabling the recruitment of ZAP70. In turn ZAP70 phosphorylates LAT, which recruits numerous signaling molecules to form the LAT signalosome. The LAT signalosome propagates signal branching to three major signaling pathways, the calcium, the mitogen-activated protein kinase (MAPK) kinase and the nuclear factor NF-kappa-B (NF-kB) pathways, leading to the mobilization of transcription factors that are critical for gene expression and essential for T cell growth and differentiation. The T cell repertoire is generated in the thymus, by V-(D)-J rearrangement. This repertoire is then shaped by intrathymic selection events to generate a peripheral T cell pool of self-MH restricted, non-autoaggressive T cells. Post-thymic interaction of alpha-beta TR with the pMH complexes shapes TR structural and functional avidity. In Homo sapiens (Human), this protein is T cell receptor beta variable 6-5.